A 697-amino-acid chain; its full sequence is Elongation factor G (697 aa).

Residues 8–283 (ERMRNIGIAA…AVVDYLPSPL (276 aa)) enclose the tr-type G domain. GTP is bound by residues 17-24 (AHIDAGKT), 81-85 (DTPGH), and 135-138 (NKMD).

It belongs to the TRAFAC class translation factor GTPase superfamily. Classic translation factor GTPase family. EF-G/EF-2 subfamily.

Its subcellular location is the cytoplasm. Its function is as follows. Catalyzes the GTP-dependent ribosomal translocation step during translation elongation. During this step, the ribosome changes from the pre-translocational (PRE) to the post-translocational (POST) state as the newly formed A-site-bound peptidyl-tRNA and P-site-bound deacylated tRNA move to the P and E sites, respectively. Catalyzes the coordinated movement of the two tRNA molecules, the mRNA and conformational changes in the ribosome. This chain is Elongation factor G, found in Solibacter usitatus (strain Ellin6076).